The sequence spans 75 residues: DNA-directed RNA polymerase subunit epsilon (75 aa).

The protein belongs to the RNA polymerase subunit epsilon family. RNAP is composed of a core of 2 alpha, a beta and a beta' subunit. The core is associated with a delta subunit, and at least one of epsilon or omega. When a sigma factor is associated with the core the holoenzyme is formed, which can initiate transcription.

It catalyses the reaction RNA(n) + a ribonucleoside 5'-triphosphate = RNA(n+1) + diphosphate. Functionally, a non-essential component of RNA polymerase (RNAP). This chain is DNA-directed RNA polymerase subunit epsilon, found in Lactobacillus gasseri (strain ATCC 33323 / DSM 20243 / BCRC 14619 / CIP 102991 / JCM 1131 / KCTC 3163 / NCIMB 11718 / NCTC 13722 / AM63).